The chain runs to 445 residues: Transcriptional enhancer factor TEF-4 (445 aa).

Disordered stretches follow at residues 1–47 and 191–217; these read MGDP…VWSP and PPASDLPGYEPPPALSPLPPPAPSPPA. The span at 25 to 37 shows a compositional bias: gly residues; the sequence is EGTGGSEGVGGDG. Positions 38 to 114 form a DNA-binding region, TEA; sequence SPDAEGVWSP…QVLARRKSRE (77 aa). The segment at 172–445 is transcriptional activation; the sequence is WNVPDVKPFS…QYHIYRLVRD (274 aa). The span at 199-216 shows a compositional bias: pro residues; it reads YEPPPALSPLPPPAPSPP.

Interacts with YAP1 and WWTR1/TAZ. As to expression, highest expression in brain. High levels also found in lung, testis and ovarian follicle cells. Lower levels in heart and spleen.

The protein localises to the nucleus. In terms of biological role, transcription factor which plays a key role in the Hippo signaling pathway, a pathway involved in organ size control and tumor suppression by restricting proliferation and promoting apoptosis. The core of this pathway is composed of a kinase cascade wherein MST1/MST2, in complex with its regulatory protein SAV1, phosphorylates and activates LATS1/2 in complex with its regulatory protein MOB1, which in turn phosphorylates and inactivates YAP1 oncoprotein and WWTR1/TAZ. Acts by mediating gene expression of YAP1 and WWTR1/TAZ, thereby regulating cell proliferation, migration and epithelial mesenchymal transition (EMT) induction. Binds to the SPH and GT-IIC 'enhansons' (5'-GTGGAATGT-3'). May be involved in the gene regulation of neural development. Binds to the M-CAT motif. The chain is Transcriptional enhancer factor TEF-4 (Tead2) from Mus musculus (Mouse).